We begin with the raw amino-acid sequence, 360 residues long: UPF0283 membrane protein Asuc_0957 (360 aa).

The next 3 helical transmembrane spans lie at 74 to 94, 102 to 122, and 215 to 235; these read VIAVAVLFLGATVAQSVQWLI, WIYFAFAVVGCSVVGLGLSAL, and AVENGIVVAISPLAIVDMLFL.

This sequence belongs to the UPF0283 family.

The protein resides in the cell inner membrane. The chain is UPF0283 membrane protein Asuc_0957 from Actinobacillus succinogenes (strain ATCC 55618 / DSM 22257 / CCUG 43843 / 130Z).